We begin with the raw amino-acid sequence, 61 residues long: Putative neurotoxin-A (61 aa).

An N-terminal signal peptide occupies residues 1–19 (MKTVCGVFMVLLALTVLLA). Cystine bridges form between C31–C50, C36–C55, and C40–C57.

Belongs to the short scorpion toxin superfamily. Expressed by the venom gland.

The protein localises to the secreted. This Lychas mucronatus (Chinese swimming scorpion) protein is Putative neurotoxin-A.